Here is a 459-residue protein sequence, read N- to C-terminus: Cysteine--tRNA ligase (459 aa).

Cysteine 31 lines the Zn(2+) pocket. A 'HIGH' region motif is present at residues 33–43 (PTVYYNPHIGN). 3 residues coordinate Zn(2+): cysteine 216, histidine 241, and glutamate 245. The 'KMSKS' region motif lies at 274 to 278 (KMSKS). Position 277 (lysine 277) interacts with ATP.

This sequence belongs to the class-I aminoacyl-tRNA synthetase family. In terms of assembly, monomer. The cofactor is Zn(2+).

The protein resides in the cytoplasm. The enzyme catalyses tRNA(Cys) + L-cysteine + ATP = L-cysteinyl-tRNA(Cys) + AMP + diphosphate. The sequence is that of Cysteine--tRNA ligase from Rickettsia conorii (strain ATCC VR-613 / Malish 7).